Consider the following 78-residue polypeptide: D-alanyl carrier protein (78 aa).

Residues 1–78 (MEFREQVLDL…KIVEALEELK (78 aa)) form the Carrier domain. At S36 the chain carries O-(pantetheine 4'-phosphoryl)serine.

It belongs to the DltC family. In terms of processing, 4'-phosphopantetheine is transferred from CoA to a specific serine of apo-DCP.

The protein resides in the cytoplasm. It participates in cell wall biogenesis; lipoteichoic acid biosynthesis. Its function is as follows. Carrier protein involved in the D-alanylation of lipoteichoic acid (LTA). The loading of thioester-linked D-alanine onto DltC is catalyzed by D-alanine--D-alanyl carrier protein ligase DltA. The DltC-carried D-alanyl group is further transferred to cell membrane phosphatidylglycerol (PG) by forming an ester bond, probably catalyzed by DltD. D-alanylation of LTA plays an important role in modulating the properties of the cell wall in Gram-positive bacteria, influencing the net charge of the cell wall. This chain is D-alanyl carrier protein, found in Staphylococcus carnosus (strain TM300).